The primary structure comprises 261 residues: 8-demethyl-8-(2,3-dimethoxy-alpha-L-rhamnosyl)-tetracenomycin-C 4'-O-methyltransferase (261 aa).

Residues 53–54 (TM), 81–85 (ETGVW), 111–115 (DSFEG), phenylalanine 167, 185–186 (DG), and serine 191 contribute to the S-adenosyl-L-methionine site. Position 185 (aspartate 185) interacts with Mg(2+). Mg(2+)-binding residues include aspartate 212 and aspartate 213.

The protein belongs to the methyltransferase TylF/MycF family. Mg(2+) is required as a cofactor.

The enzyme catalyses 8-demethyl-8-(2,3-di-O-methyl-alpha-L-rhamnosyl)-tetracenomycin C + S-adenosyl-L-methionine = 8-demethyl-8-(2,3,4-tri-O-methyl-alpha-L-rhamnosyl)-tetracenomycin C + S-adenosyl-L-homocysteine + H(+). It functions in the pathway antibiotic biosynthesis. O-methyltransferase involved in the biosynthesis of the permethylated L-rhamnose moiety of elloramycin, an antitumor polyketide. Mediates the methylation of the hydroxy groups at the 4'-position after the sugar moiety has been attached to the aglycon. The chain is 8-demethyl-8-(2,3-dimethoxy-alpha-L-rhamnosyl)-tetracenomycin-C 4'-O-methyltransferase from Streptomyces olivaceus.